Here is a 346-residue protein sequence, read N- to C-terminus: B3 domain-containing protein At5g60142 (346 aa).

A DNA-binding region (TF-B3) is located at residues 13-109; sequence PKFFKVYLPD…CFNFCIYGRA (97 aa). Disordered stretches follow at residues 158 to 179 and 192 to 243; these read QDYN…ADND and TSSE…HDRQ. Residues 192–217 show a composition bias toward acidic residues; it reads TSSEDIIVIDDDDDDDDQDYGDDDHA. Basic and acidic residues predominate over residues 218–229; sequence DVEKERWRGVKT.

It is found in the nucleus. The polypeptide is B3 domain-containing protein At5g60142 (Arabidopsis thaliana (Mouse-ear cress)).